The sequence spans 147 residues: uncharacterized protein (147 aa).

Residues 7–147 (LEINYKTDEL…GHDVLVWAPK (141 aa)) enclose the N-acetyltransferase domain.

This is an uncharacterized protein from Staphylococcus haemolyticus (strain JCSC1435).